The primary structure comprises 89 residues: Small ribosomal subunit protein uS15 (89 aa).

This sequence belongs to the universal ribosomal protein uS15 family. In terms of assembly, part of the 30S ribosomal subunit. Forms a bridge to the 50S subunit in the 70S ribosome, contacting the 23S rRNA.

Functionally, one of the primary rRNA binding proteins, it binds directly to 16S rRNA where it helps nucleate assembly of the platform of the 30S subunit by binding and bridging several RNA helices of the 16S rRNA. Forms an intersubunit bridge (bridge B4) with the 23S rRNA of the 50S subunit in the ribosome. The sequence is that of Small ribosomal subunit protein uS15 from Gloeobacter violaceus (strain ATCC 29082 / PCC 7421).